The primary structure comprises 460 residues: Cyclin-A1-1 (460 aa).

2 disordered regions span residues 1-52 and 95-126; these read MSNI…ITNQ and PHKV…KSPQ. Low complexity-rich tracts occupy residues 10–19 and 100–111; these read SSFSSSTKSS and SSPSKSDDGSVS.

This sequence belongs to the cyclin family. Cyclin AB subfamily. As to quaternary structure, interacts with FZR2/CCS52A1, FZR1/CCS52A2 and FZR3/CCS52B.

The sequence is that of Cyclin-A1-1 (CYCA1-1) from Arabidopsis thaliana (Mouse-ear cress).